The sequence spans 147 residues: MSPKFMFFSIIAVWSCAAVTEALFIQHRSLANFFFMTLTAAKRSPQEYDGYGNYCGWGGEGTPVDSIDRCCQVHDNCYGTVNENECGHYIRNVKLIDYDWHMEGTEIVCDPKDDACGRALCKCDKDIIDCFNENDKDYNPEYNKVIG.

The N-terminal stretch at 1 to 22 (MSPKFMFFSIIAVWSCAAVTEA) is a signal peptide. Residues 23 to 28 (LFIQHR) constitute a propeptide that is removed on maturation. Disulfide bonds link Cys-55–Cys-71, Cys-70–Cys-130, Cys-77–Cys-123, Cys-86–Cys-116, and Cys-109–Cys-121. Gly-56 and Gly-58 together coordinate Ca(2+). His-74 is an active-site residue. Residue Asp-75 participates in Ca(2+) binding. Residue Asp-124 is part of the active site.

The cofactor is Ca(2+). Expressed by the venom gland.

It is found in the secreted. It catalyses the reaction a 1,2-diacyl-sn-glycero-3-phosphocholine + H2O = a 1-acyl-sn-glycero-3-phosphocholine + a fatty acid + H(+). Its function is as follows. PLA2 catalyzes the calcium-dependent hydrolysis of the 2-acyl groups in 3-sn-phosphoglycerides. This chain is Phospholipase A2 SSD1043, found in Scolopendra dehaani (Thai centipede).